The primary structure comprises 251 residues: 5'-nucleotidase SurE (251 aa).

A divalent metal cation contacts are provided by Asp8, Asp9, Ser39, and Asn91.

It belongs to the SurE nucleotidase family. A divalent metal cation serves as cofactor.

The protein localises to the cytoplasm. The catalysed reaction is a ribonucleoside 5'-phosphate + H2O = a ribonucleoside + phosphate. In terms of biological role, nucleotidase that shows phosphatase activity on nucleoside 5'-monophosphates. The polypeptide is 5'-nucleotidase SurE (Thioalkalivibrio sulfidiphilus (strain HL-EbGR7)).